We begin with the raw amino-acid sequence, 206 residues long: Large ribosomal subunit protein uL4 (206 aa).

Residues 63-94 (MYKQKGTGRARHHSARAPQFRGGGKAHGPVVR) form a disordered region. A compositionally biased stretch (basic residues) spans 64 to 77 (YKQKGTGRARHHSA).

This sequence belongs to the universal ribosomal protein uL4 family. As to quaternary structure, part of the 50S ribosomal subunit.

Functionally, one of the primary rRNA binding proteins, this protein initially binds near the 5'-end of the 23S rRNA. It is important during the early stages of 50S assembly. It makes multiple contacts with different domains of the 23S rRNA in the assembled 50S subunit and ribosome. Its function is as follows. Forms part of the polypeptide exit tunnel. The protein is Large ribosomal subunit protein uL4 of Mesorhizobium japonicum (strain LMG 29417 / CECT 9101 / MAFF 303099) (Mesorhizobium loti (strain MAFF 303099)).